A 199-amino-acid chain; its full sequence is Cell division protein SepF (199 aa).

A disordered region spans residues 15-79 (TEDGDETEVQ…PQPQQKSSTE (65 aa)).

This sequence belongs to the SepF family. In terms of assembly, homodimer. Interacts with FtsZ.

It localises to the cytoplasm. Functionally, cell division protein that is part of the divisome complex and is recruited early to the Z-ring. Probably stimulates Z-ring formation, perhaps through the cross-linking of FtsZ protofilaments. Its function overlaps with FtsA. This is Cell division protein SepF from Streptococcus sanguinis (strain SK36).